A 485-amino-acid chain; its full sequence is 28S rRNA (uridine-N(3))-methyltransferase (485 aa).

S-adenosyl-L-methionine-binding residues include Arg-296, Gly-318, and Asn-347.

It belongs to the class IV-like SAM-binding methyltransferase superfamily.

It localises to the nucleus. It carries out the reaction uridine in 28S rRNA + S-adenosyl-L-methionine = N(3)-methyluridine in 28S rRNA + S-adenosyl-L-homocysteine + H(+). In terms of biological role, S-adenosyl-L-methionine-dependent methyltransferase that specifically methylates the uridine in position 3485 of 28S rRNA. The chain is 28S rRNA (uridine-N(3))-methyltransferase from Drosophila melanogaster (Fruit fly).